The primary structure comprises 362 residues: Adenosine deaminase (362 aa).

2 residues coordinate Zn(2+): histidine 19 and histidine 21. The substrate site is built by histidine 21, aspartate 23, and glycine 181. Residue histidine 208 participates in Zn(2+) binding. Residue glutamate 211 is the Proton donor of the active site. Aspartate 300 serves as a coordination point for Zn(2+).

The protein belongs to the metallo-dependent hydrolases superfamily. Adenosine and AMP deaminases family. Adenosine deaminase subfamily. The cofactor is Zn(2+).

It catalyses the reaction adenosine + H2O + H(+) = inosine + NH4(+). It carries out the reaction 2'-deoxyadenosine + H2O + H(+) = 2'-deoxyinosine + NH4(+). Its function is as follows. Catalyzes the hydrolytic deamination of adenosine and 2-deoxyadenosine. This Mycobacterium ulcerans (strain Agy99) protein is Adenosine deaminase.